A 196-amino-acid polypeptide reads, in one-letter code: GTP cyclohydrolase-2 (196 aa).

49 to 53 (RVHSE) lines the GTP pocket. Zn(2+) contacts are provided by Cys-54, Cys-65, and Cys-67. GTP is bound by residues Gln-70, 92-94 (EGR), and Thr-114. Residue Asp-126 is the Proton acceptor of the active site. Arg-128 functions as the Nucleophile in the catalytic mechanism. Residues Thr-149 and Lys-154 each coordinate GTP.

Belongs to the GTP cyclohydrolase II family. Homodimer. The cofactor is Zn(2+).

The enzyme catalyses GTP + 4 H2O = 2,5-diamino-6-hydroxy-4-(5-phosphoribosylamino)-pyrimidine + formate + 2 phosphate + 3 H(+). It functions in the pathway cofactor biosynthesis; riboflavin biosynthesis; 5-amino-6-(D-ribitylamino)uracil from GTP: step 1/4. Functionally, catalyzes the conversion of GTP to 2,5-diamino-6-ribosylamino-4(3H)-pyrimidinone 5'-phosphate (DARP), formate and pyrophosphate. This chain is GTP cyclohydrolase-2, found in Enterobacter sp. (strain 638).